We begin with the raw amino-acid sequence, 774 residues long: Lysyl oxidase homolog 2 (774 aa).

Positions 1 to 25 (MERPLCSHLCSCLAMLALLSPLSLA) are cleaved as a signal peptide. SRCR domains are found at residues 58–159 (LRLA…VVCS), 188–302 (IRAI…VSCV), 326–425 (VRLR…VRCN), and 435–544 (LRLN…VACS). 9 cysteine pairs are disulfide-bonded: cysteine 84/cysteine 148, cysteine 97/cysteine 158, cysteine 128/cysteine 138, cysteine 218/cysteine 291, cysteine 231/cysteine 301, cysteine 265/cysteine 275, cysteine 351/cysteine 414, cysteine 364/cysteine 424, and cysteine 395/cysteine 405. A glycan (N-linked (GlcNAc...) asparagine) is linked at asparagine 288. Asparagine 455 is a glycosylation site (N-linked (GlcNAc...) (complex) asparagine). Cystine bridges form between cysteine 464-cysteine 530, cysteine 477-cysteine 543, and cysteine 511-cysteine 521. A lysyl-oxidase like region spans residues 548-751 (PDLVLNAEMV…WMYNCHIGGS (204 aa)). Residues aspartate 549 and leucine 550 each coordinate Ca(2+). 4 cysteine pairs are disulfide-bonded: cysteine 573/cysteine 625, cysteine 579/cysteine 695, cysteine 657/cysteine 673, and cysteine 663/cysteine 685. Residues histidine 626, histidine 628, and histidine 630 each contribute to the Cu cation site. Residue asparagine 644 is glycosylated (N-linked (GlcNAc...) (complex) asparagine). The lysine tyrosylquinone (Lys-Tyr) cross-link spans 653-689 (KASFCLEDTECEGDIQKNYECANFGDQGITMGCWDMY). 2',4',5'-topaquinone is present on tyrosine 689. Glutamate 722, aspartate 724, asparagine 727, and asparagine 728 together coordinate Ca(2+). Cysteine 732 and cysteine 746 form a disulfide bridge.

It belongs to the lysyl oxidase family. In terms of assembly, component of some chromatin repressor complex. Interacts with SNAI1. Interacts with TAF10. Interacts with HSPA5. Interacts with EFEMP2. Requires Cu cation as cofactor. Lysine tyrosylquinone residue serves as cofactor. The lysine tyrosylquinone cross-link (LTQ) is generated by condensation of the epsilon-amino group of a lysine with a topaquinone produced by oxidation of tyrosine. In terms of processing, N-glycosylated. N-glycosylation on Asn-455 and Asn-644 may be essential for proper folding and secretion; may be composed of a fucosylated carbohydrates attached to a trimannose N-linked glycan core. As to expression, expressed in many tissues. Highest expression in reproductive tissues, placenta, uterus and prostate. In esophageal epithelium, expressed in the basal, prickle and granular cell layers. Up-regulated in a number of cancers cells and tissues.

Its subcellular location is the secreted. It localises to the extracellular space. The protein localises to the extracellular matrix. It is found in the basement membrane. The protein resides in the nucleus. Its subcellular location is the chromosome. It localises to the endoplasmic reticulum. It carries out the reaction L-lysyl-[protein] + O2 + H2O = (S)-2-amino-6-oxohexanoyl-[protein] + H2O2 + NH4(+). With respect to regulation, according to some reports, it is inhibited by beta-aminopropionitrile (BAPN). According to another report, it is not inhibited by beta-aminopropionitrile (BAPN). Specifically inhibited by a mouse monoclonal antibody AB0023, inhibition occurs in a non-competitive manner. Functionally, mediates the post-translational oxidative deamination of lysine residues on target proteins leading to the formation of deaminated lysine (allysine). Acts as a transcription corepressor and specifically mediates deamination of trimethylated 'Lys-4' of histone H3 (H3K4me3), a specific tag for epigenetic transcriptional activation. Shows no activity against histone H3 when it is trimethylated on 'Lys-9' (H3K9me3) or 'Lys-27' (H3K27me3) or when 'Lys-4' is monomethylated (H3K4me1) or dimethylated (H3K4me2). Also mediates deamination of methylated TAF10, a member of the transcription factor IID (TFIID) complex, which induces release of TAF10 from promoters, leading to inhibition of TFIID-dependent transcription. LOXL2-mediated deamination of TAF10 results in transcriptional repression of genes required for embryonic stem cell pluripotency including POU5F1/OCT4, NANOG, KLF4 and SOX2. Involved in epithelial to mesenchymal transition (EMT) via interaction with SNAI1 and participates in repression of E-cadherin CDH1, probably by mediating deamination of histone H3. During EMT, involved with SNAI1 in negatively regulating pericentromeric heterochromatin transcription. SNAI1 recruits LOXL2 to pericentromeric regions to oxidize histone H3 and repress transcription which leads to release of heterochromatin component CBX5/HP1A, enabling chromatin reorganization and acquisition of mesenchymal traits. Interacts with the endoplasmic reticulum protein HSPA5 which activates the IRE1-XBP1 pathway of the unfolded protein response, leading to expression of several transcription factors involved in EMT and subsequent EMT induction. Involved in E-cadherin repression following hypoxia, a hallmark of EMT believed to amplify tumor aggressiveness, suggesting that it may play a role in tumor progression. When secreted into the extracellular matrix, promotes cross-linking of extracellular matrix proteins by mediating oxidative deamination of peptidyl lysine residues in precursors to fibrous collagen and elastin. Acts as a regulator of sprouting angiogenesis, probably via collagen IV scaffolding. Acts as a regulator of chondrocyte differentiation, probably by regulating expression of factors that control chondrocyte differentiation. In Homo sapiens (Human), this protein is Lysyl oxidase homolog 2 (LOXL2).